A 160-amino-acid polypeptide reads, in one-letter code: MATASKESPSENRARLRRAARLSAVQALYQMEIGGLGASAVIREFREHRFGACGEAPEFVEADEDFFESLVAGVVERQADVDPAMDALLADKWRLERLDATVRAILRVGGFELLYRKDVPARVVIDEYIEVANAFFEGAEPKFINAAFDRCARGARPDEF.

It belongs to the NusB family.

Involved in transcription antitermination. Required for transcription of ribosomal RNA (rRNA) genes. Binds specifically to the boxA antiterminator sequence of the ribosomal RNA (rrn) operons. This is Transcription antitermination protein NusB from Maricaulis maris (strain MCS10) (Caulobacter maris).